We begin with the raw amino-acid sequence, 583 residues long: Proline--tRNA ligase (583 aa).

This sequence belongs to the class-II aminoacyl-tRNA synthetase family. ProS type 1 subfamily. As to quaternary structure, homodimer.

The protein resides in the cytoplasm. It catalyses the reaction tRNA(Pro) + L-proline + ATP = L-prolyl-tRNA(Pro) + AMP + diphosphate. Functionally, catalyzes the attachment of proline to tRNA(Pro) in a two-step reaction: proline is first activated by ATP to form Pro-AMP and then transferred to the acceptor end of tRNA(Pro). As ProRS can inadvertently accommodate and process non-cognate amino acids such as alanine and cysteine, to avoid such errors it has two additional distinct editing activities against alanine. One activity is designated as 'pretransfer' editing and involves the tRNA(Pro)-independent hydrolysis of activated Ala-AMP. The other activity is designated 'posttransfer' editing and involves deacylation of mischarged Ala-tRNA(Pro). The misacylated Cys-tRNA(Pro) is not edited by ProRS. The sequence is that of Proline--tRNA ligase from Acidothermus cellulolyticus (strain ATCC 43068 / DSM 8971 / 11B).